Consider the following 663-residue polypeptide: Drug sensory protein A (663 aa).

Helical transmembrane passes span 32–52 (LMAA…FWAV), 165–185 (VFIP…GINP), and 199–219 (VTIA…VFNA). The 53-residue stretch at 220–272 (LTITQPIKELLLGVKNIAAGNFKQRITLPFGGELGELIVNFNEMAERLERYEA) folds into the HAMP domain. The region spanning 281-351 (EKAKLDTLVS…QPLRELAADQ (71 aa)) is the PAS domain. Positions 429–656 (NVSHELRTPL…TFWFDLAVYQ (228 aa)) constitute a Histidine kinase domain. A Phosphohistidine; by autocatalysis modification is found at His432.

The protein localises to the cell membrane. It catalyses the reaction ATP + protein L-histidine = ADP + protein N-phospho-L-histidine.. The chain is Drug sensory protein A (dspA) from Synechocystis sp. (strain ATCC 27184 / PCC 6803 / Kazusa).